Consider the following 71-residue polypeptide: MKSNKATFFLGLLLVYAFCIMLIESRCYTNDDCKDGQPCPVPLACLFGSCICPWKSQSKLPICQIICANLD.

An N-terminal signal peptide occupies residues 1 to 25 (MKSNKATFFLGLLLVYAFCIMLIES). Cystine bridges form between Cys27/Cys45, Cys33/Cys50, and Cys39/Cys52.

The protein belongs to the DEFL family.

Its subcellular location is the secreted. This is Putative defensin-like protein 303 from Arabidopsis thaliana (Mouse-ear cress).